Here is a 948-residue protein sequence, read N- to C-terminus: Bifunctional uridylyltransferase/uridylyl-removing enzyme (948 aa).

Residues 1 to 372 form a uridylyltransferase region; the sequence is METHHIDFST…RFANRSRKIP (372 aa). The uridylyl-removing stretch occupies residues 373-728; sequence GTVEFVEDRG…VRTDSFHAIT (356 aa). In terms of domain architecture, HD spans 489–605; the sequence is VDEHLIRAVE…IDFADRVQSL (117 aa). 2 consecutive ACT domains span residues 729-810 and 840-921; these read EITV…EVIA and VIEV…ERMP.

The protein belongs to the GlnD family. Mg(2+) is required as a cofactor.

It catalyses the reaction [protein-PII]-L-tyrosine + UTP = [protein-PII]-uridylyl-L-tyrosine + diphosphate. It carries out the reaction [protein-PII]-uridylyl-L-tyrosine + H2O = [protein-PII]-L-tyrosine + UMP + H(+). Its activity is regulated as follows. Uridylyltransferase (UTase) activity is inhibited by glutamine, while glutamine activates uridylyl-removing (UR) activity. Its function is as follows. Modifies, by uridylylation and deuridylylation, the PII regulatory proteins (GlnB and homologs), in response to the nitrogen status of the cell that GlnD senses through the glutamine level. Under low glutamine levels, catalyzes the conversion of the PII proteins and UTP to PII-UMP and PPi, while under higher glutamine levels, GlnD hydrolyzes PII-UMP to PII and UMP (deuridylylation). Thus, controls uridylylation state and activity of the PII proteins, and plays an important role in the regulation of nitrogen fixation and metabolism. This is Bifunctional uridylyltransferase/uridylyl-removing enzyme from Rhizobium tropici.